Consider the following 487-residue polypeptide: MFVLDPAAICCCAVTCCCGVGSVCAYRKRQSIPHPSECALIGKMYRLCGCHDHDKFDVLIEIHEIHDLTQSGKFFVEVHAGRSEERTGVCSAKKGRVEIQERVNIHVRQADKTLTVRVKKQGLTSTEAIGDAVIGVKSELIDGAFPKRQSFFCQKDGKTACKIVLSFHRLDTGNVSLGDFQMSPLLHQALLIAQSEAEARGETLQVDILNMTEVERLRFLSKVLEGPLKQMSSIGGAWKNLYFRAAERRNGKWEWQYWSSKDDCMSGIKKRGAYSFMAISLVLPDKHDRHCFYIRYHDTGGVHDLFFKRVDRDRNLWSDGLFEFIEKLREYLEKHPEVAMSGRGGHSSRREKKKEGDVGGSRTPRKRDGKALTPRTGASDDAGDDGIRGRSPRGSDRRALSHRSFVDPAELAEKRRVLSPRETAADEMTRPRASVLKGRMIEGLMYDRSLQPGEKNEEASEADERPRERTEGVEYEREEEQPLLFTQ.

The interval 337 to 487 (EVAMSGRGGH…EEEQPLLFTQ (151 aa)) is disordered. Composition is skewed to basic and acidic residues over residues 385–399 (DGIR…DRRA) and 454–475 (EKNE…GVEY).

As to quaternary structure, interacts with RASP2.

It is found in the cytoplasmic vesicle. The protein localises to the secretory vesicle. It localises to the rhoptry membrane. This chain is Rhoptry apical surface protein 1, found in Toxoplasma gondii (strain ATCC 50853 / GT1).